A 351-amino-acid chain; its full sequence is MRRQDFNFELPEALIAQQPAKERTQSRLLVMNADGSVSDCHFPDILSYVNENDCLIFNNTKVIPARLFGQKLTGGKVELLIERVLDERRVLTHIRSSNAPKSGAKLRIEEAFDAEVLGREGALFEVQLSKDEAPELTALELIEAHGHMPLPPYIEREDQLEDKERYQTVYSEKPGAVAAPTAGLHFDNDLLDKIKAKGAAAGFVTLHVGAGTFKPVQVDDISEHVMHSEVIEVLPETVELIKQTRQKGGRVIAVGTTSVRCLESAASFSENGELAPYQGETDIFITPGYDFKVVDVLLTNFHLPESTLIMLVSALAGYDRTMQAYAHAVEQKYRFFSYGDAMLVHPPTSDS.

It belongs to the QueA family. Monomer.

It localises to the cytoplasm. The enzyme catalyses 7-aminomethyl-7-carbaguanosine(34) in tRNA + S-adenosyl-L-methionine = epoxyqueuosine(34) in tRNA + adenine + L-methionine + 2 H(+). The protein operates within tRNA modification; tRNA-queuosine biosynthesis. Functionally, transfers and isomerizes the ribose moiety from AdoMet to the 7-aminomethyl group of 7-deazaguanine (preQ1-tRNA) to give epoxyqueuosine (oQ-tRNA). The chain is S-adenosylmethionine:tRNA ribosyltransferase-isomerase from Hydrogenovibrio crunogenus (strain DSM 25203 / XCL-2) (Thiomicrospira crunogena).